The following is a 422-amino-acid chain: Glutamate-1-semialdehyde 2,1-aminomutase (422 aa).

Lysine 264 is subject to N6-(pyridoxal phosphate)lysine.

It belongs to the class-III pyridoxal-phosphate-dependent aminotransferase family. HemL subfamily. Homodimer. It depends on pyridoxal 5'-phosphate as a cofactor.

The protein localises to the cytoplasm. It catalyses the reaction (S)-4-amino-5-oxopentanoate = 5-aminolevulinate. It participates in porphyrin-containing compound metabolism; protoporphyrin-IX biosynthesis; 5-aminolevulinate from L-glutamyl-tRNA(Glu): step 2/2. In Clostridium acetobutylicum (strain ATCC 824 / DSM 792 / JCM 1419 / IAM 19013 / LMG 5710 / NBRC 13948 / NRRL B-527 / VKM B-1787 / 2291 / W), this protein is Glutamate-1-semialdehyde 2,1-aminomutase.